Reading from the N-terminus, the 346-residue chain is KH domain-containing, RNA-binding, signal transduction-associated protein 3 (346 aa).

Positions 1-160 are involved in homodimerization; that stretch reads MEEKYLPELM…IKKFLIPDYN (160 aa). A Glycyl lysine isopeptide (Lys-Gly) (interchain with G-Cter in SUMO2) cross-link involves residue Lys-4. The 67-residue stretch at 61–127 folds into the KH domain; it reads LIPVKQFPKF…AKYFHLNDDL (67 aa). The segment at 212-251 is interaction with SIAH1; that stretch reads RPVGVVVPRGTPTPRGVLSTRGPVSRGRGLLTPRARGVPP. The span at 213 to 228 shows a compositional bias: low complexity; the sequence is PVGVVVPRGTPTPRGV. Disordered stretches follow at residues 213–267 and 318–346; these read PVGV…ETYG and QEEW…YGRY. A compositionally biased stretch (pro residues) spans 253–262; that stretch reads GYRPPPPPPT.

Belongs to the KHDRBS family. In terms of assembly, self-associates to form homooligomers; dimerization increases RNA affinity. Interacts with KHDRBS2/SLM-1. Interacts with KHDRBS1/SAM68; heterooligomer formation of KHDRBS family proteins may modulate RNA substrate specificity. Interacts with the splicing regulatory proteins SFRS9, SAFB and YTHDC1. Interacts with HNRPL. Interacts with RBMX, RBMY1A1, p85 subunit of PI3-kinase, SERPINB5. Interacts with SIAH1 which promotes targeting for degradation. Phosphorylated on tyrosine residues. Isoform 1 C-terminal region is tyrosine-rich, but isoform 2 lacking this C-terminal region is also tyrosine-phosphorylated. Ubiquitous with higher expression in testis, skeletal muscle and brain. Expressed in the kidney only in podocytes, the glomerular epithelial cells of the kidney. Strongly expressed after meiosis.

The protein resides in the nucleus. Its function is as follows. RNA-binding protein that plays a role in the regulation of alternative splicing and influences mRNA splice site selection and exon inclusion. Binds preferentially to the 5'-[AU]UAAA-3' motif in vitro. Binds optimally to RNA containing 5'-[AU]UAA-3' as a bipartite motif spaced by more than 15 nucleotides. Binds poly(A). RNA-binding abilities are down-regulated by tyrosine kinase PTK6. Involved in splice site selection of vascular endothelial growth factor. In vitro regulates CD44 alternative splicing by direct binding to purine-rich exonic enhancer. Can regulate alternative splicing of neurexins NRXN1-3 in the laminin G-like domain 6 containing the evolutionary conserved neurexin alternative spliced segment 4 (AS4) involved in neurexin selective targeting to postsynaptic partners such as neuroligins and LRRTM family members. Targeted, cell-type specific splicing regulation of NRXN1 at AS4 is involved in neuronal glutamatergic synapse function and plasticity. May regulate expression of KHDRBS2/SLIM-1 in defined brain neuron populations by modifying its alternative splicing. Can bind FABP9 mRNA. May play a role as a negative regulator of cell growth. Inhibits cell proliferation. Functionally, (Microbial infection) Involved in post-transcriptional regulation of HIV-1 gene expression. This chain is KH domain-containing, RNA-binding, signal transduction-associated protein 3 (KHDRBS3), found in Homo sapiens (Human).